A 105-amino-acid polypeptide reads, in one-letter code: Ketoisovalerate oxidoreductase subunit VorD (105 aa).

4Fe-4S ferredoxin-type domains follow at residues 44–73 (FKPV…IKPD) and 74–103 (GYVA…MIKE). The [4Fe-4S] cluster site is built by Cys53, Cys56, Cys59, Cys63, Cys83, Cys86, Cys89, and Cys93.

Heterotetramer of one alpha, one beta, one delta and one gamma chain. Requires [4Fe-4S] cluster as cofactor.

The catalysed reaction is 3-methyl-2-oxobutanoate + 2 oxidized [2Fe-2S]-[ferredoxin] + CoA = 2-methylpropanoyl-CoA + 2 reduced [2Fe-2S]-[ferredoxin] + CO2 + H(+). The polypeptide is Ketoisovalerate oxidoreductase subunit VorD (vorD) (Pyrococcus furiosus (strain ATCC 43587 / DSM 3638 / JCM 8422 / Vc1)).